We begin with the raw amino-acid sequence, 203 residues long: Urease accessory protein UreG (203 aa).

GTP is bound at residue Gly14–Thr21.

It belongs to the SIMIBI class G3E GTPase family. UreG subfamily. In terms of assembly, homodimer. UreD, UreF and UreG form a complex that acts as a GTP-hydrolysis-dependent molecular chaperone, activating the urease apoprotein by helping to assemble the nickel containing metallocenter of UreC. The UreE protein probably delivers the nickel.

It localises to the cytoplasm. Facilitates the functional incorporation of the urease nickel metallocenter. This process requires GTP hydrolysis, probably effectuated by UreG. The polypeptide is Urease accessory protein UreG (Agrobacterium fabrum (strain C58 / ATCC 33970) (Agrobacterium tumefaciens (strain C58))).